A 238-amino-acid chain; its full sequence is Transcriptional activator protein AnoR (238 aa).

Residues 170–236 (EFSQFNLYLT…SAAIRAVMLG (67 aa)) enclose the HTH luxR-type domain. A DNA-binding region (H-T-H motif) is located at residues 195–214 (SAEIAQIIGVTERTVNFHLC).

It belongs to the autoinducer-regulated transcriptional regulatory protein family.

Positively regulates the expression of anoI. Required for biofilm formation and motility. Probably part of a quorum-sensing system with AnoI. This Acinetobacter nosocomialis protein is Transcriptional activator protein AnoR.